The sequence spans 257 residues: Phosphate import ATP-binding protein PstB (257 aa).

In terms of domain architecture, ABC transporter spans 11 to 252; that stretch reads IQVRDLNFYY…PAKKQTEDYI (242 aa). 43–50 lines the ATP pocket; sequence GPSGSGKS.

Belongs to the ABC transporter superfamily. Phosphate importer (TC 3.A.1.7) family. In terms of assembly, the complex is composed of two ATP-binding proteins (PstB), two transmembrane proteins (PstC and PstA) and a solute-binding protein (PstS).

Its subcellular location is the cell inner membrane. It catalyses the reaction phosphate(out) + ATP + H2O = ADP + 2 phosphate(in) + H(+). Functionally, part of the ABC transporter complex PstSACB involved in phosphate import. Responsible for energy coupling to the transport system. This chain is Phosphate import ATP-binding protein PstB, found in Salmonella choleraesuis (strain SC-B67).